Here is a 226-residue protein sequence, read N- to C-terminus: MARLLQASCLLSLLLAGFVPQSRGQEKSKMDCHGGMSSTIYEYGALTIDGEEYIPFKQYAGKYVLFVNVASYUGLTGQYIELNALQEELAPFGLVILGFPCNQFGKQEPGENSEILPTLKYVRPGGGFVPNFQLFEKGDVNGEKEQKFYTFLKNSCPPTSELLGTSDRLFWEPMKVHDIRWNFEKFLVGPDGTPIMRWHHRTTVSNVKMDILSYMRRQAALGVKRK.

A signal peptide spans 1 to 24 (MARLLQASCLLSLLLAGFVPQSRG). Selenocysteine 73 is a catalytic residue. Residue selenocysteine 73 is a non-standard amino acid, selenocysteine.

Belongs to the glutathione peroxidase family. Homotetramer. In terms of tissue distribution, secreted in plasma.

The protein resides in the secreted. The catalysed reaction is 2 glutathione + H2O2 = glutathione disulfide + 2 H2O. It carries out the reaction tert-butyl hydroperoxide + 2 glutathione = tert-butanol + glutathione disulfide + H2O. In terms of biological role, protects cells and enzymes from oxidative damage, by catalyzing the reduction of hydrogen peroxide, lipid peroxides and organic hydroperoxide, by glutathione. This Hylobates lar (Lar gibbon) protein is Glutathione peroxidase 3.